The primary structure comprises 341 residues: Serine/threonine-protein kinase pdik1l (341 aa).

Positions 8-332 (YELIQEVGRG…FELELRLVRI (325 aa)) constitute a Protein kinase domain. 14–22 (VGRGSYGVV) contributes to the ATP binding site. D164 serves as the catalytic Proton acceptor.

The protein belongs to the protein kinase superfamily. Ser/Thr protein kinase family.

The protein resides in the nucleus. It catalyses the reaction L-seryl-[protein] + ATP = O-phospho-L-seryl-[protein] + ADP + H(+). The enzyme catalyses L-threonyl-[protein] + ATP = O-phospho-L-threonyl-[protein] + ADP + H(+). The protein is Serine/threonine-protein kinase pdik1l (pdik1l) of Danio rerio (Zebrafish).